The following is a 397-amino-acid chain: Protein ROH1D (397 aa).

A helical membrane pass occupies residues 247-267 (LIVPVYTMTTVLLFVMWALVA).

Belongs to the ROH1 family. As to quaternary structure, interacts with EXO70C2. As to expression, mostly expressed in mature pollen.

The protein resides in the membrane. It localises to the cytoplasm. The protein localises to the cytosol. Involved in the regulation of plant growth, and modulates pollen development to ensure male fertility. May also affect the composition of the inner seed coat mucilage layer. This is Protein ROH1D from Arabidopsis thaliana (Mouse-ear cress).